The chain runs to 556 residues: Zinc finger protein 18 (556 aa).

Positions 41–123 (RQLFRQFRYQ…TLVESLKGDP (83 aa)) constitute an SCAN box domain. Residues 169–195 (QDLPLQNTSSAPGELLSHGVKEESDLE) are disordered. Residues 218–291 (EVGTALLPSL…HLHSAEKMAR (74 aa)) form the KRAB domain. 5 consecutive C2H2-type zinc fingers follow at residues 415–437 (PTCR…QRTH), 443–465 (FHCR…QRTH), 471–493 (CKCD…EKIH), 499–521 (YKCP…QRVH), and 527–549 (YKCT…QRSH).

This sequence belongs to the krueppel C2H2-type zinc-finger protein family.

It is found in the nucleus. Its function is as follows. May be involved in transcriptional regulation. The sequence is that of Zinc finger protein 18 (Znf18) from Rattus norvegicus (Rat).